We begin with the raw amino-acid sequence, 191 residues long: Large ribosomal subunit protein uL6B (191 aa).

This sequence belongs to the universal ribosomal protein uL6 family. As to quaternary structure, component of the large ribosomal subunit (LSU). Mature yeast ribosomes consist of a small (40S) and a large (60S) subunit. The 40S small subunit contains 1 molecule of ribosomal RNA (18S rRNA) and 33 different proteins (encoded by 57 genes). The large 60S subunit contains 3 rRNA molecules (25S, 5.8S and 5S rRNA) and 46 different proteins (encoded by 81 genes).

It localises to the cytoplasm. Its function is as follows. Component of the ribosome, a large ribonucleoprotein complex responsible for the synthesis of proteins in the cell. The small ribosomal subunit (SSU) binds messenger RNAs (mRNAs) and translates the encoded message by selecting cognate aminoacyl-transfer RNA (tRNA) molecules. The large subunit (LSU) contains the ribosomal catalytic site termed the peptidyl transferase center (PTC), which catalyzes the formation of peptide bonds, thereby polymerizing the amino acids delivered by tRNAs into a polypeptide chain. The nascent polypeptides leave the ribosome through a tunnel in the LSU and interact with protein factors that function in enzymatic processing, targeting, and the membrane insertion of nascent chains at the exit of the ribosomal tunnel. The sequence is that of Large ribosomal subunit protein uL6B from Saccharomyces cerevisiae (strain ATCC 204508 / S288c) (Baker's yeast).